We begin with the raw amino-acid sequence, 762 residues long: MHKPLRWLITIAFYVSNVILIGYSLSSNGSISEFYLHSVVLIECFSLLGVVTSDCLTPSLSYISSNIFHISDRVSGMTLLALGNALPDITSTYQSMKSGVTSLAIGELFGGIFFLLTVVIGLMGCVATIQFQHDKSIETYTEESFDQNLSYDRSNYILDVGIFTFMLLVSGTFLADGRLYFWECIVMVLTYCCCAVYLIKSYKYPCEINDALEREVEIKKTVLANNHITVPNRFTLTTTSDITSTDDGIRYVRPLGDTQIDEDNAISLDPTRLPSKSLDNISRFNQGIPERRDLIRRRIRGYLRSHYHGWVRMTLQDLLNIWEKQNLFNNTVKSLSLPSDDTHLFTKASLDEEGRPLIRKRMNSLQPKDFYKYLSLRNGENSNALDTAISAPQNEYQTYYNEPTSLFLTVPQKKTSKKSLSCDRIPNLVRSNNIILNDEATRTQESTNALNSISDVIDNSLLQYERDDIILDRTLSLCSTKSRTAWHSFQLYNYLTDVSLEIGFFEFLSLLVTTPVSIILYLSIPSEISQTDHDLPLSYLQNIQLIASPIILNQLITNNFSFWLLILSLVIAILLYFKTRTIPNKFNSDIIFTVAFLLSLACLSKAVHIIVVTLTHWINVFNISETILGLTIFTWGNSIGDLVSNITFVKIGVLEIAIGACFGSPLLYFLFGVGFDGIMIMLGDKTGKIVSGRDSNILMHHIDFKVDKNLINTGVGILIAFLIFTVLIPLNDWKIDKKISIALLTLYIVVTCISVFLEVHQV.

Residues 1-26 form the signal peptide; that stretch reads MHKPLRWLITIAFYVSNVILIGYSLS. Residues 27–30 lie on the Extracellular side of the membrane; that stretch reads SNGS. The N-linked (GlcNAc...) asparagine glycan is linked to asparagine 28. A helical transmembrane segment spans residues 31–51; the sequence is ISEFYLHSVVLIECFSLLGVV. Topologically, residues 52 to 102 are cytoplasmic; the sequence is TSDCLTPSLSYISSNIFHISDRVSGMTLLALGNALPDITSTYQSMKSGVTS. A helical transmembrane segment spans residues 103 to 123; sequence LAIGELFGGIFFLLTVVIGLM. The Extracellular portion of the chain corresponds to 124–156; it reads GCVATIQFQHDKSIETYTEESFDQNLSYDRSNY. Asparagine 148 is a glycosylation site (N-linked (GlcNAc...) asparagine). The helical transmembrane segment at 157 to 177 threads the bilayer; sequence ILDVGIFTFMLLVSGTFLADG. A topological domain (cytoplasmic) is located at residue arginine 178. Residues 179-199 form a helical membrane-spanning segment; it reads LYFWECIVMVLTYCCCAVYLI. At 200-501 the chain is on the extracellular side; that stretch reads KSYKYPCEIN…YNYLTDVSLE (302 aa). Residues asparagine 280 and asparagine 329 are each glycosylated (N-linked (GlcNAc...) asparagine). The helical transmembrane segment at 502-522 threads the bilayer; the sequence is IGFFEFLSLLVTTPVSIILYL. Topologically, residues 523–554 are cytoplasmic; the sequence is SIPSEISQTDHDLPLSYLQNIQLIASPIILNQ. Residues 555–575 form a helical membrane-spanning segment; that stretch reads LITNNFSFWLLILSLVIAILL. At 576 to 589 the chain is on the extracellular side; the sequence is YFKTRTIPNKFNSD. The helical transmembrane segment at 590–610 threads the bilayer; that stretch reads IIFTVAFLLSLACLSKAVHII. The Cytoplasmic portion of the chain corresponds to 611-615; that stretch reads VVTLT. A helical transmembrane segment spans residues 616–636; that stretch reads HWINVFNISETILGLTIFTWG. Residues 637–650 lie on the Extracellular side of the membrane; the sequence is NSIGDLVSNITFVK. N-linked (GlcNAc...) asparagine glycosylation is present at asparagine 645. A helical membrane pass occupies residues 651-671; the sequence is IGVLEIAIGACFGSPLLYFLF. The Cytoplasmic portion of the chain corresponds to 672 to 709; sequence GVGFDGIMIMLGDKTGKIVSGRDSNILMHHIDFKVDKN. A helical transmembrane segment spans residues 710–730; that stretch reads LINTGVGILIAFLIFTVLIPL. The Extracellular portion of the chain corresponds to 731–738; sequence NDWKIDKK. A helical membrane pass occupies residues 739–759; sequence ISIALLTLYIVVTCISVFLEV. Topologically, residues 760-762 are cytoplasmic; it reads HQV.

The protein belongs to the Ca(2+):cation antiporter (CaCA) (TC 2.A.19) family.

Its subcellular location is the membrane. In terms of biological role, putative cation exchanger. This Saccharomyces cerevisiae (strain ATCC 204508 / S288c) (Baker's yeast) protein is Putative cation exchanger YDL206W.